The sequence spans 226 residues: ATP synthase F(0) complex subunit a (226 aa).

5 helical membrane passes run 5–25, 68–88, 97–117, 136–156, and 189–209; these read LFAP…LIII, WSLM…LGML, QLSM…TTGF, FLIP…PVAW, and AFIT…VALI.

It belongs to the ATPase A chain family. As to quaternary structure, component of the ATP synthase complex composed at least of ATP5F1A/subunit alpha, ATP5F1B/subunit beta, ATP5MC1/subunit c (homooctomer), MT-ATP6/subunit a, MT-ATP8/subunit 8, ATP5ME/subunit e, ATP5MF/subunit f, ATP5MG/subunit g, ATP5MK/subunit k, ATP5MJ/subunit j, ATP5F1C/subunit gamma, ATP5F1D/subunit delta, ATP5F1E/subunit epsilon, ATP5PF/subunit F6, ATP5PB/subunit b, ATP5PD/subunit d, ATP5PO/subunit OSCP. ATP synthase complex consists of a soluble F(1) head domain (subunits alpha(3) and beta(3)) - the catalytic core - and a membrane F(0) domain - the membrane proton channel (subunits c, a, 8, e, f, g, k and j). These two domains are linked by a central stalk (subunits gamma, delta, and epsilon) rotating inside the F1 region and a stationary peripheral stalk (subunits F6, b, d, and OSCP). Interacts with DNAJC30; interaction is direct.

It localises to the mitochondrion inner membrane. The enzyme catalyses H(+)(in) = H(+)(out). Its function is as follows. Subunit a, of the mitochondrial membrane ATP synthase complex (F(1)F(0) ATP synthase or Complex V) that produces ATP from ADP in the presence of a proton gradient across the membrane which is generated by electron transport complexes of the respiratory chain. ATP synthase complex consist of a soluble F(1) head domain - the catalytic core - and a membrane F(1) domain - the membrane proton channel. These two domains are linked by a central stalk rotating inside the F(1) region and a stationary peripheral stalk. During catalysis, ATP synthesis in the catalytic domain of F(1) is coupled via a rotary mechanism of the central stalk subunits to proton translocation. With the subunit c (ATP5MC1), forms the proton-conducting channel in the F(0) domain, that contains two crucial half-channels (inlet and outlet) that facilitate proton movement from the mitochondrial intermembrane space (IMS) into the matrix. Protons are taken up via the inlet half-channel and released through the outlet half-channel, following a Grotthuss mechanism. This chain is ATP synthase F(0) complex subunit a, found in Balaenoptera physalus (Fin whale).